We begin with the raw amino-acid sequence, 58 residues long: Attractin (58 aa).

Cystine bridges form between Cys4/Cys41, Cys13/Cys33, and Cys20/Cys26. N-linked (GlcNAc...) asparagine glycosylation is present at Asn8.

In terms of tissue distribution, produced by the albumen gland of the egg cordons.

The protein resides in the secreted. Its function is as follows. Water-borne pheromone that attract the marine mollusk Aplysia into breeding aggregations and coordinate male and female reproductive behavior within the aggregation. This is Attractin (ATT) from Aplysia fasciata (Mottled sea hare).